A 589-amino-acid chain; its full sequence is Acyl-CoA ligase SID4 (589 aa).

Residues 12–20 carry the PTS2-type peroxisomal targeting signal motif; it reads RLQQTLNHI. Residues 228-236, 367-372, D458, and R473 each bind ATP; these read TSGSTGNPK and SSYGLT. T372 contacts substrate. CoA-binding positions include 481–483, K547, and 555–557; these read GGE and FGL. K572 is an ATP binding site.

Belongs to the ATP-dependent AMP-binding enzyme family.

It localises to the peroxisome. Its pathway is siderophore biosynthesis. Functionally, acyl-CoA ligase; part of the gene cluster that mediates the biosynthesis of hydroxamate-containing siderophores that play a critical role in virulence via intracellular iron acquisition during macrophage infection. This Ajellomyces capsulatus (Darling's disease fungus) protein is Acyl-CoA ligase SID4.